The sequence spans 221 residues: Ribonuclease 3 (221 aa).

The 123-residue stretch at 1-123 (MERTGHAFAD…LIAVLYLDGG (123 aa)) folds into the RNase III domain. Residue Glu36 participates in Mg(2+) binding. Asp40 is an active-site residue. Mg(2+)-binding residues include Asp109 and Glu112. Residue Glu112 is part of the active site. Residues 148-217 (DAKTELQEWA…AAALLLREGV (70 aa)) form the DRBM domain.

This sequence belongs to the ribonuclease III family. In terms of assembly, homodimer. It depends on Mg(2+) as a cofactor.

The protein localises to the cytoplasm. It carries out the reaction Endonucleolytic cleavage to 5'-phosphomonoester.. Its function is as follows. Digests double-stranded RNA. Involved in the processing of primary rRNA transcript to yield the immediate precursors to the large and small rRNAs (23S and 16S). Processes some mRNAs, and tRNAs when they are encoded in the rRNA operon. Processes pre-crRNA and tracrRNA of type II CRISPR loci if present in the organism. The sequence is that of Ribonuclease 3 from Mesorhizobium japonicum (strain LMG 29417 / CECT 9101 / MAFF 303099) (Mesorhizobium loti (strain MAFF 303099)).